A 473-amino-acid chain; its full sequence is Proton-coupled folate transporter (473 aa).

Positions 1-20 (MAAPSDPPTAATPPAPPPPA) are enriched in pro residues. Residues 1-21 (MAAPSDPPTAATPPAPPPPAR) form a disordered region. The Cytoplasmic segment spans residues 1 to 29 (MAAPSDPPTAATPPAPPPPARRCLLAPSV). A helical transmembrane segment spans residues 30-48 (EPLLFLATLALGLQVPLAT). At 49 to 90 (QYLWDRLGAERGYVGPNASSPHGCGNGSGAVDPLREEVEALV) the chain is on the extracellular side. Residues Asn-65 and Asn-74 are each glycosylated (N-linked (GlcNAc...) asparagine). A disulfide bridge connects residues Cys-72 and Cys-306. A helical transmembrane segment spans residues 91 to 116 (AHWNLCINLGGFFVGLFSVTLFGPWS). Residue Asn-98 participates in pemetrexed binding. Topologically, residues 117 to 120 (DSVG) are cytoplasmic. A helical membrane pass occupies residues 121-143 (RRPVLVLPAVGMAVQAAVYLLVM). Topologically, residues 144–148 (YLRLH) are extracellular. A helical transmembrane segment spans residues 149–162 (VAYLLLGRIISGLL). Over 163–185 (GDYNLILAGCFASVADSSNQRTR) the chain is Cytoplasmic. Asp-164 and Glu-193 together coordinate H(+). The chain crosses the membrane as a helical span at residues 186–211 (TFRVAILEACLGVAGMVASVGGGQWR). Glu-193 provides a ligand contact to pemetrexed. Topologically, residues 212 to 216 (KAEGY) are extracellular. A helical membrane pass occupies residues 217-235 (INPFWLVLAASLAAALYAA). At 236-274 (LCLQETVKQRRAAKLLTLQHYKAVYKLYTAPEDLSSRRK) the chain is on the cytoplasmic side. Residues 275–297 (LALYSLAFFLLVTVHFGTKDLYV) form a helical membrane-spanning segment. A H(+)-binding site is contributed by His-289. The Extracellular segment spans residues 298–310 (LYELGSPLCWASD). A helical transmembrane segment spans residues 311–333 (LIGYGSAASYLAYLSSLGGLRLL). A pemetrexed-binding site is contributed by Tyr-323. The Cytoplasmic segment spans residues 334 to 339 (QLCLED). The helical transmembrane segment at 340–359 (TWVAEIGLISNIAGLVVISL) threads the bilayer. Topologically, residues 360-363 (ATTT) are extracellular. Residues 364-384 (PLMFTGYGIMFLSMAATPVIR) form a helical membrane-spanning segment. The Cytoplasmic segment spans residues 385 to 396 (AKLSKLVGETEQ). A helical transmembrane segment spans residues 397-422 (GALFASVACVEGLCSLVATGVFNSLY). Positions 407 and 411 each coordinate pemetrexed. At 423–430 (PSTLHFMR) the chain is on the extracellular side. A helical transmembrane segment spans residues 431–449 (GFPFLFGAILLLIPAAIMG). Residues 450 to 473 (WIEIQDSNLQYSHFSDASSSPADG) lie on the Cytoplasmic side of the membrane.

Belongs to the major facilitator superfamily. SLC46A family. Monomer. As to expression, widely expressed, including brain, aorta, liver, kidney, spleen, small intestine, pancreas, ovary and testis.

The protein resides in the cell membrane. It localises to the apical cell membrane. Its subcellular location is the basolateral cell membrane. The protein localises to the endosome membrane. It is found in the cytoplasm. It catalyses the reaction folate(in) + H(+)(in) = folate(out) + H(+)(out). The enzyme catalyses (6S)-5-methyl-5,6,7,8-tetrahydrofolate(in) + H(+)(in) = (6S)-5-methyl-5,6,7,8-tetrahydrofolate(out) + H(+)(out). It carries out the reaction methotrexate(in) + H(+)(in) = methotrexate(out) + H(+)(out). The catalysed reaction is pemetrexed(in) + H(+)(in) = pemetrexed(out) + H(+)(out). Its function is as follows. Proton-coupled folate symporter that mediates folate absorption using an H(+) gradient as a driving force. Involved in the intestinal absorption of folates at the brush-border membrane of the proximal jejunum, and the transport from blood to cerebrospinal fluid across the choroid plexus. Functions at acidic pH via alternate outward- and inward-open conformation states. Protonation of residues in the outward open state primes the protein for transport. Binding of folate promotes breaking of salt bridge network and subsequent closure of the extracellular gate, leading to the inward-open state and release of protons and folate. Also able to transport antifolate drugs, such as methotrexate and pemetrexed. Also acts as a lower-affinity, pH-independent heme carrier protein and constitutes the main importer of heme in the intestine. Imports heme in the retina and retinal pigment epithelium, in neurons of the hippocampus, in hepatocytes and in the renal epithelial cells. The polypeptide is Proton-coupled folate transporter (Gallus gallus (Chicken)).